A 338-amino-acid polypeptide reads, in one-letter code: POU domain, class 4, transcription factor 3 (338 aa).

The POU-IV box signature appears at arginine 56–isoleucine 65. Residues threonine 91–histidine 112 form a disordered region. One can recognise a POU-specific domain in the interval aspartate 179 to glutamate 256. Residues arginine 274–lysine 333 constitute a DNA-binding region (homeobox).

The protein belongs to the POU transcription factor family. In terms of assembly, interacts with ISL1. In terms of tissue distribution, expressed in the chochlea of the inner ear.

It localises to the nucleus. It is found in the cytoplasm. In terms of biological role, acts as a transcriptional activator. Acts by binding to sequences related to the consensus octamer motif 5'-ATGCAAAT-3' in the regulatory regions of its target genes. Involved in the auditory system development, required for terminal differentiation of hair cells in the inner ear. The sequence is that of POU domain, class 4, transcription factor 3 from Rattus norvegicus (Rat).